The primary structure comprises 359 residues: 3-isopropylmalate dehydrogenase (359 aa).

The substrate site is built by Arg-97, Arg-107, Arg-135, and Asp-224. Mg(2+) is bound by residues Asp-224, Asp-248, and Asp-252. 282–294 is a binding site for NAD(+); sequence GSAPDIAGKDIAN.

This sequence belongs to the isocitrate and isopropylmalate dehydrogenases family. LeuB type 1 subfamily. As to quaternary structure, homodimer. Requires Mg(2+) as cofactor. Mn(2+) serves as cofactor.

The protein localises to the cytoplasm. The enzyme catalyses (2R,3S)-3-isopropylmalate + NAD(+) = 4-methyl-2-oxopentanoate + CO2 + NADH. Its pathway is amino-acid biosynthesis; L-leucine biosynthesis; L-leucine from 3-methyl-2-oxobutanoate: step 3/4. Catalyzes the oxidation of 3-carboxy-2-hydroxy-4-methylpentanoate (3-isopropylmalate) to 3-carboxy-4-methyl-2-oxopentanoate. The product decarboxylates to 4-methyl-2 oxopentanoate. This chain is 3-isopropylmalate dehydrogenase, found in Prochlorococcus marinus (strain NATL2A).